A 377-amino-acid chain; its full sequence is Guanine nucleotide-binding protein subunit alpha-13 (377 aa).

S-palmitoyl cysteine attachment occurs at residues cysteine 14 and cysteine 18. The 331-residue stretch at 47–377 (RLVKILLLGA…HDNLKQLMLQ (331 aa)) folds into the G-alpha domain. The G1 motif stretch occupies residues 50–63 (KILLLGAGESGKST). Residues 58-63 (ESGKST), serine 173, and 197-200 (LLAR) each bind GTP. Residue serine 62 coordinates Mg(2+). Residues 195 to 203 (DILLARRPT) form a G2 motif region. A Mg(2+)-binding site is contributed by threonine 203. Phosphothreonine; by PKA is present on threonine 203. Positions 218–227 (FKMVDVGGQR) are G3 motif. A G4 motif region spans residues 287-294 (ILFLNKTD). GTP-binding positions include 291 to 294 (NKTD) and alanine 349. A G5 motif region spans residues 347–352 (TTAINT).

Belongs to the G-alpha family. G(12) subfamily. As to quaternary structure, g proteins are composed of 3 units; alpha, beta and gamma. The alpha chain contains the guanine nucleotide binding site. Interacts with UBXD5. Interacts with HAX1. Interacts (in GTP-bound form) with PPP5C (via TPR repeats); activates PPP5C phosphatase activity and translocates PPP5C to the cell membrane. Interacts with RGS22. Interacts (in GTP-bound form) with ARHGEF1. Interacts (in GTP-bound form) with ARHGEF11 (via RGS domain). Interacts (in GTP-bound form) with ARHGEF12 (via RGS domain). Interacts with CTNND1. Interacts with GASL2L2. Interacts with GPR35. Interacts with GPR174. Post-translationally, palmitoylation is critical for proper membrane localization and signaling. In terms of processing, phosphorylation on Thr-203 by PKA destabilizes the heterotrimer of alpha, beta and gamma, and inhibits Rho activation. In terms of tissue distribution, expressed in testis, including in Leydig cells and in the seminiferous epithelium, in differentiating cells from the spermatogonia to mature spermatozoa stages and round spermatids (at protein level). Expressed in 99.2% of spermatozoa from healthy individuals, but only in 28.6% of macrocephalic spermatozoa from infertile patients (at protein level).

Its subcellular location is the cell membrane. It is found in the melanosome. The protein resides in the cytoplasm. The protein localises to the nucleus. Functionally, guanine nucleotide-binding proteins (G proteins) are involved as modulators or transducers in various transmembrane signaling systems. Activates effector molecule RhoA by binding and activating RhoGEFs (ARHGEF1/p115RhoGEF, ARHGEF11/PDZ-RhoGEF and ARHGEF12/LARG). GNA13-dependent Rho signaling subsequently regulates transcription factor AP-1 (activating protein-1). Promotes tumor cell invasion and metastasis by activating RhoA/ROCK signaling pathway. Inhibits CDH1-mediated cell adhesion in a process independent from Rho activation. In lymphoid follicles, transmits P2RY8- and S1PR2-dependent signals that lead to inhibition of germinal center (GC) B cell growth and migration outside the GC niche. The chain is Guanine nucleotide-binding protein subunit alpha-13 (GNA13) from Homo sapiens (Human).